We begin with the raw amino-acid sequence, 252 residues long: 2-succinyl-6-hydroxy-2,4-cyclohexadiene-1-carboxylate synthase (252 aa).

The protein belongs to the AB hydrolase superfamily. MenH family. Monomer.

It catalyses the reaction 5-enolpyruvoyl-6-hydroxy-2-succinyl-cyclohex-3-ene-1-carboxylate = (1R,6R)-6-hydroxy-2-succinyl-cyclohexa-2,4-diene-1-carboxylate + pyruvate. It functions in the pathway quinol/quinone metabolism; 1,4-dihydroxy-2-naphthoate biosynthesis; 1,4-dihydroxy-2-naphthoate from chorismate: step 3/7. Its pathway is quinol/quinone metabolism; menaquinone biosynthesis. In terms of biological role, catalyzes a proton abstraction reaction that results in 2,5-elimination of pyruvate from 2-succinyl-5-enolpyruvyl-6-hydroxy-3-cyclohexene-1-carboxylate (SEPHCHC) and the formation of 2-succinyl-6-hydroxy-2,4-cyclohexadiene-1-carboxylate (SHCHC). This chain is 2-succinyl-6-hydroxy-2,4-cyclohexadiene-1-carboxylate synthase, found in Klebsiella pneumoniae (strain 342).